The chain runs to 651 residues: MSITPADLSPASSSDHREKLQELLTAVRDLHDTALQELQAKIAKLKKERCLDAQKLSEFHSKNQHLREQQKIQQEKIRQLEDRLRSGPCDRCTVKEKQIKKTNTELEDNNQRNLSVISELEAERKTLTDENRRLSLELERLRRSGSPQNTSSEAEEGMIPDSPLRPLSLPVASKMKRRKEQNHVRYTETPLSLSHPESRQREQSVAFGCNGKGVLVAETCEMDATSVAERDNKRHFRIVVPETCRPDVYPEQVDDVDDDDLHIPSHTEQNQKPELRDCTNILIAGQNDDSPLILRCRPLASQDHQSSIDDVLRTPANSSTCVLTKGKRKHSNGAKKDREISDCRLDADETDIKGIIFASTPANGRLQSKNQETSEIETTQDSKKKCLDGHTPRKSLVQNHHAPFPYDQSWSVDPGADLGQYDTESSPQPEHQARTDLETLDTDCTFVSHSLLLRGQKTTGQSQTTGIGQKANDSLADIFDKTGYGEYESCPQDDSIDLKQDSVYEEEREEDDPEEKPEAAVVFRRPADRKPLVSDSDKSSRNKSFACVEVVRKKDERRKLKGHYCKECEVYYADLPEEEREKKLTSCSRHRYRYIPPSTPENFWEVGFPSTQTCVERGYIKEDEQPDVRIRRRRPYLAMFSPKAKSQKKKH.

2 coiled-coil regions span residues 35–84 (LQEL…EDRL) and 117–138 (ISEL…SLEL). Disordered stretches follow at residues 138–199 (LERL…PESR), 363–433 (NGRL…EHQA), and 487–539 (YESC…SDKS). Residues 363-379 (NGRLQSKNQETSEIETT) are compositionally biased toward polar residues. The segment covering 380-391 (QDSKKKCLDGHT) has biased composition (basic and acidic residues). The segment covering 503-515 (VYEEEREEDDPEE) has biased composition (acidic residues). Basic and acidic residues predominate over residues 525-539 (RPADRKPLVSDSDKS). Phosphothreonine is present on residues Thr599 and Thr611.

This sequence belongs to the COM1/SAE2/CtIP family. Homotetramer; formed by antiparallel association of helical extensions protruding from the N-termini of two parallel coiled-coil dimers. Interacts with the MRN complex; the interaction links DNA sensing to resection. Interacts with samhd1. Phosphorylation at Thr-599 and Thr-611 promote interaction with nbn and recruitment to double-strand breaks (DSBs).

Its subcellular location is the nucleus. The protein localises to the chromosome. In terms of biological role, endonuclease that cooperates with the MRE11-RAD50-NBN (MRN) complex in DNA-end resection, the first step of double-strand break (DSB) repair through the homologous recombination (HR) pathway. Functions downstream of the MRN complex and ATM, promotes ATR activation and its recruitment to DSBs in the S/G2 phase facilitating the generation of ssDNA. Specifically promotes the endonuclease activity of the MRN complex to clear DNA ends containing protein adducts: recruited to DSBs by nbn following phosphorylation, and promotes the endonuclease of mre11 to clear protein-DNA adducts and generate clean double-strand break ends. The protein is DNA endonuclease RBBP8 (rbbp8) of Danio rerio (Zebrafish).